We begin with the raw amino-acid sequence, 345 residues long: S-adenosylmethionine:tRNA ribosyltransferase-isomerase (345 aa).

Belongs to the QueA family. As to quaternary structure, monomer.

It is found in the cytoplasm. It carries out the reaction 7-aminomethyl-7-carbaguanosine(34) in tRNA + S-adenosyl-L-methionine = epoxyqueuosine(34) in tRNA + adenine + L-methionine + 2 H(+). It functions in the pathway tRNA modification; tRNA-queuosine biosynthesis. Functionally, transfers and isomerizes the ribose moiety from AdoMet to the 7-aminomethyl group of 7-deazaguanine (preQ1-tRNA) to give epoxyqueuosine (oQ-tRNA). The protein is S-adenosylmethionine:tRNA ribosyltransferase-isomerase of Alkalilimnicola ehrlichii (strain ATCC BAA-1101 / DSM 17681 / MLHE-1).